The chain runs to 884 residues: Peroxidase-like protein 2 (884 aa).

Disordered stretches follow at residues 1 to 53 (TTSC…RTKG), 78 to 188 (VHSK…SQGA), 204 to 279 (EKET…DDDD), 653 to 695 (PEIP…SATQ), 710 to 744 (DLQP…GAVG), and 828 to 884 (VGGM…SDTK). Residues 17-29 (GTCNNVNKPTVGS) show a composition bias toward polar residues. A compositionally biased stretch (basic and acidic residues) spans 32 to 53 (DKFKRDVKPQYDDKKGDPRTKG). The segment covering 91–118 (KSSAVSPKMPSMGNLQSLGNLLSLGSVP) has biased composition (low complexity). Over residues 119–129 (VPAPAPAPEPV) the composition is skewed to pro residues. Basic residues-rich tracts occupy residues 160–172 (PKSK…KPKP) and 230–245 (RTPK…QSIF). Positions 246–267 (RRRDDRKDDRKGLRGTKGRRDD) are enriched in basic and acidic residues. The segment covering 268–279 (SDDNDDSDDDDD) has biased composition (acidic residues). Residues 828–856 (VGGMGGSVGVGGSVGSGGSGGSRGAGGSG) are compositionally biased toward gly residues. The span at 865–884 (DDSKCSDDEKQKYCKNSDTK) shows a compositional bias: basic and acidic residues.

It belongs to the peroxidase family. In terms of tissue distribution, component of the acid-insoluble and acid-soluble organic matrix of calcified layers of the shell (at protein level).

Its subcellular location is the secreted. In Lottia gigantea (Giant owl limpet), this protein is Peroxidase-like protein 2.